A 160-amino-acid polypeptide reads, in one-letter code: NADH-quinone oxidoreductase subunit B (160 aa).

[4Fe-4S] cluster is bound by residues cysteine 39, cysteine 40, cysteine 104, and cysteine 135.

It belongs to the complex I 20 kDa subunit family. As to quaternary structure, NDH-1 is composed of 14 different subunits. Subunits NuoB, C, D, E, F, and G constitute the peripheral sector of the complex. Requires [4Fe-4S] cluster as cofactor.

The protein localises to the cell membrane. The enzyme catalyses a quinone + NADH + 5 H(+)(in) = a quinol + NAD(+) + 4 H(+)(out). Functionally, NDH-1 shuttles electrons from NADH, via FMN and iron-sulfur (Fe-S) centers, to quinones in the respiratory chain. The immediate electron acceptor for the enzyme in this species is believed to be a menaquinone. Couples the redox reaction to proton translocation (for every two electrons transferred, four hydrogen ions are translocated across the cytoplasmic membrane), and thus conserves the redox energy in a proton gradient. In Amoebophilus asiaticus (strain 5a2), this protein is NADH-quinone oxidoreductase subunit B.